Here is a 520-residue protein sequence, read N- to C-terminus: Laccase-2 (520 aa).

A signal peptide spans Met1–Ala19. Plastocyanin-like domains are found at residues Thr21 to Tyr145, Val157 to Ala305, and Thr375 to Ala488. The Cu cation site is built by His82 and His84. Intrachain disulfides connect Cys103-Cys509 and Cys135-Cys229. An N-linked (GlcNAc...) asparagine glycan is attached at Asn108. Cu cation contacts are provided by His127 and His129. N-linked (GlcNAc...) asparagine glycans are attached at residues Asn241 and Asn299. Cu cation-binding residues include His417, His420, His422, His470, Cys471, His472, and His476. N-linked (GlcNAc...) asparagine glycosylation is present at Asn492.

Belongs to the multicopper oxidase family. The cofactor is Cu cation.

It localises to the secreted. It catalyses the reaction 4 hydroquinone + O2 = 4 benzosemiquinone + 2 H2O. Functionally, lignin degradation and detoxification of lignin-derived products. In Agaricus bisporus (White button mushroom), this protein is Laccase-2 (lcc2).